The chain runs to 420 residues: Serine hydroxymethyltransferase (420 aa).

Residues Leu121 and Gly125 to Leu127 each bind (6S)-5,6,7,8-tetrahydrofolate. Lys230 carries the N6-(pyridoxal phosphate)lysine modification. Position 355 to 357 (Ser355 to Phe357) interacts with (6S)-5,6,7,8-tetrahydrofolate.

Belongs to the SHMT family. In terms of assembly, homodimer. Pyridoxal 5'-phosphate serves as cofactor.

Its subcellular location is the cytoplasm. The catalysed reaction is (6R)-5,10-methylene-5,6,7,8-tetrahydrofolate + glycine + H2O = (6S)-5,6,7,8-tetrahydrofolate + L-serine. It functions in the pathway one-carbon metabolism; tetrahydrofolate interconversion. Its pathway is amino-acid biosynthesis; glycine biosynthesis; glycine from L-serine: step 1/1. Functionally, catalyzes the reversible interconversion of serine and glycine with tetrahydrofolate (THF) serving as the one-carbon carrier. This reaction serves as the major source of one-carbon groups required for the biosynthesis of purines, thymidylate, methionine, and other important biomolecules. Also exhibits THF-independent aldolase activity toward beta-hydroxyamino acids, producing glycine and aldehydes, via a retro-aldol mechanism. This is Serine hydroxymethyltransferase from Streptococcus mutans serotype c (strain ATCC 700610 / UA159).